A 486-amino-acid polypeptide reads, in one-letter code: MNYLPIFVDLKNRPVLVVGGGHIAVRKIDALLKAGASVKVVAEKLHSSLQSLTDEGKVEWIAKTFEANQVTNSYLVIAATDDNALNQLVFETAESQQRLVNVVDDQPRCSYIFPSIIDRSPVQIAISSGGAAPVLIRLLREKLEALIPPNLGAMADIATRWRSAVKTQFPQLTQRRRFWEKLFTHQSFQRLTENHQIEQAEALVEAELHNNNPVLGEVSLVGAGPGDAGLLTLKGLQTIQQADVVLYDALVSEAVLELVRRDADKVFVGKLAGKHSVKQEDTNQLLVKYAKQGKRVVRLKGGDPFVFGRGGEELEILKAENIPFSIVPGITAALGATAYAGIPLTHRDHAQTAMFITGHLKPDGNRLKWETLAQGNQTLVVYMGTIKAAELSAELQKHGKPSDTPVAIISNGTLPNQQVQTGVLSELAELAEKAPTPALIVIGEVVKLQKDLAWFGKEAVQFVSTQETLWQKPTLQNKETHWKQAA.

Residues 1–204 are precorrin-2 dehydrogenase /sirohydrochlorin ferrochelatase; that stretch reads MNYLPIFVDL…HQIEQAEALV (204 aa). NAD(+) is bound by residues 22–23 and 43–44; these read HI and EK. S128 bears the Phosphoserine mark. Positions 216–486 are uroporphyrinogen-III C-methyltransferase; sequence GEVSLVGAGP…NKETHWKQAA (271 aa). Position 225 (P225) interacts with S-adenosyl-L-methionine. The active-site Proton acceptor is the D248. The active-site Proton donor is the K270. S-adenosyl-L-methionine-binding positions include 301–303, V306, 331–332, M383, and G412; these read GGD and TA.

It in the N-terminal section; belongs to the precorrin-2 dehydrogenase / sirohydrochlorin ferrochelatase family. This sequence in the C-terminal section; belongs to the precorrin methyltransferase family.

The catalysed reaction is uroporphyrinogen III + 2 S-adenosyl-L-methionine = precorrin-2 + 2 S-adenosyl-L-homocysteine + H(+). The enzyme catalyses precorrin-2 + NAD(+) = sirohydrochlorin + NADH + 2 H(+). It carries out the reaction siroheme + 2 H(+) = sirohydrochlorin + Fe(2+). The protein operates within cofactor biosynthesis; adenosylcobalamin biosynthesis; precorrin-2 from uroporphyrinogen III: step 1/1. It functions in the pathway cofactor biosynthesis; adenosylcobalamin biosynthesis; sirohydrochlorin from precorrin-2: step 1/1. It participates in porphyrin-containing compound metabolism; siroheme biosynthesis; precorrin-2 from uroporphyrinogen III: step 1/1. Its pathway is porphyrin-containing compound metabolism; siroheme biosynthesis; siroheme from sirohydrochlorin: step 1/1. The protein operates within porphyrin-containing compound metabolism; siroheme biosynthesis; sirohydrochlorin from precorrin-2: step 1/1. Functionally, multifunctional enzyme that catalyzes the SAM-dependent methylations of uroporphyrinogen III at position C-2 and C-7 to form precorrin-2 via precorrin-1. Then it catalyzes the NAD-dependent ring dehydrogenation of precorrin-2 to yield sirohydrochlorin. Finally, it catalyzes the ferrochelation of sirohydrochlorin to yield siroheme. The sequence is that of Siroheme synthase from Actinobacillus pleuropneumoniae serotype 3 (strain JL03).